The sequence spans 361 residues: Probable dual-specificity RNA methyltransferase RlmN (361 aa).

The active-site Proton acceptor is the glutamate 99. The 238-residue stretch at glycine 105–proline 342 folds into the Radical SAM core domain. A disulfide bridge links cysteine 112 with cysteine 347. Cysteine 119, cysteine 123, and cysteine 126 together coordinate [4Fe-4S] cluster. S-adenosyl-L-methionine contacts are provided by residues glycine 171–glutamate 172, serine 204, serine 227–histidine 229, and asparagine 304. Cysteine 347 serves as the catalytic S-methylcysteine intermediate.

It belongs to the radical SAM superfamily. RlmN family. The cofactor is [4Fe-4S] cluster.

Its subcellular location is the cytoplasm. It carries out the reaction adenosine(2503) in 23S rRNA + 2 reduced [2Fe-2S]-[ferredoxin] + 2 S-adenosyl-L-methionine = 2-methyladenosine(2503) in 23S rRNA + 5'-deoxyadenosine + L-methionine + 2 oxidized [2Fe-2S]-[ferredoxin] + S-adenosyl-L-homocysteine. The catalysed reaction is adenosine(37) in tRNA + 2 reduced [2Fe-2S]-[ferredoxin] + 2 S-adenosyl-L-methionine = 2-methyladenosine(37) in tRNA + 5'-deoxyadenosine + L-methionine + 2 oxidized [2Fe-2S]-[ferredoxin] + S-adenosyl-L-homocysteine. Specifically methylates position 2 of adenine 2503 in 23S rRNA and position 2 of adenine 37 in tRNAs. The sequence is that of Probable dual-specificity RNA methyltransferase RlmN from Chlorobium luteolum (strain DSM 273 / BCRC 81028 / 2530) (Pelodictyon luteolum).